The sequence spans 292 residues: Short chain dehydrogenase mpl6 (292 aa).

8 residues coordinate NADP(+): V37, D95, N122, R156, Y188, K192, V221, and T223. Catalysis depends on Y188, which acts as the Proton donor. The Lowers pKa of active site Tyr role is filled by K192.

The protein belongs to the short-chain dehydrogenases/reductases (SDR) family.

Its pathway is mycotoxin biosynthesis. Short chain dehydrogenase; part of the gene cluster that mediates the biosynthesis of the mycotoxin citrinin, a hepato-nephrotoxic compound to humans due to inhibition of respiration complex III. The pathway begins with the synthesis of a keto-aldehyde intermediate by the citrinin PKS (pksCT) from successive condensations of 4 malonyl-CoA units, presumably with a simple acetyl-CoA starter unit. Release of the keto-aldehyde intermediate is consistent with the presence of the C-terminal reductive release domain. Mp11 collaborates with pksCT by catalyzing the hydrolysis of ACP-bound acyl intermediates to free the ACP from stalled intermediates. Mpl2 then catalyzes the oxidation of the C-12 methyl of the ketone intermediate to an alcohol intermediate which is further oxidized by the oxidoreductase mpl7 to produce a bisaldehyde intermediate. The fourth catalytic step is catalyzed by the mpl4 aldehyde dehydrogenase. The final transformation is the reduction of C-3 by mpl6 to provide the chemically stable citrinin nucleus. The sequence is that of Short chain dehydrogenase mpl6 from Monascus purpureus (Red mold).